Reading from the N-terminus, the 159-residue chain is Transcription elongation factor GreA (159 aa).

The stretch at 47 to 77 (SENAEYDAARDKQATIENEITEIQHILDNYE) forms a coiled coil.

Belongs to the GreA/GreB family.

Necessary for efficient RNA polymerase transcription elongation past template-encoded arresting sites. The arresting sites in DNA have the property of trapping a certain fraction of elongating RNA polymerases that pass through, resulting in locked ternary complexes. Cleavage of the nascent transcript by cleavage factors such as GreA or GreB allows the resumption of elongation from the new 3'terminus. GreA releases sequences of 2 to 3 nucleotides. In Metamycoplasma arthritidis (strain 158L3-1) (Mycoplasma arthritidis), this protein is Transcription elongation factor GreA.